A 191-amino-acid chain; its full sequence is Neurotrophic factor BDNF precursor form (191 aa).

Residues 1 to 23 (GQGSLAYPGLRTQGNLETLGGPN) form a disordered region. A propeptide spanning residues 1 to 100 (GQGSLAYPGL…AANMSMRVRR (100 aa)) is cleaved from the precursor. Residue Asn-93 is glycosylated (N-linked (GlcNAc...) asparagine). A disulfide bridge links Cys-113 with Cys-180.

The protein belongs to the NGF-beta family.

It localises to the secreted. Functionally, promotes the survival of neuronal populations that are all located either in the central nervous system or directly connected to it. This is Neurotrophic factor BDNF precursor form (BDNF) from Anilius scytale (Coral cylinder snake).